Reading from the N-terminus, the 248-residue chain is Probable transcriptional regulatory protein HCH_04926 (248 aa).

The protein belongs to the TACO1 family.

The protein resides in the cytoplasm. The polypeptide is Probable transcriptional regulatory protein HCH_04926 (Hahella chejuensis (strain KCTC 2396)).